Consider the following 629-residue polypeptide: tRNA uridine 5-carboxymethylaminomethyl modification enzyme MnmG (629 aa).

FAD is bound by residues 14–19 (GAGHAG), Val-126, and Ser-181. An NAD(+)-binding site is contributed by 273–287 (GPRYCPSIEDKVVRF). Gln-370 is a binding site for FAD.

It belongs to the MnmG family. Homodimer. Heterotetramer of two MnmE and two MnmG subunits. Requires FAD as cofactor.

The protein resides in the cytoplasm. Functionally, NAD-binding protein involved in the addition of a carboxymethylaminomethyl (cmnm) group at the wobble position (U34) of certain tRNAs, forming tRNA-cmnm(5)s(2)U34. This Bacillus cereus (strain ZK / E33L) protein is tRNA uridine 5-carboxymethylaminomethyl modification enzyme MnmG.